We begin with the raw amino-acid sequence, 291 residues long: Undecaprenyl-diphosphatase (291 aa).

Transmembrane regions (helical) follow at residues methionine 1–phenylalanine 21, serine 48–phenylalanine 68, leucine 102–isoleucine 122, leucine 126–alanine 146, isoleucine 162–phenylalanine 182, serine 203–leucine 223, isoleucine 231–alanine 251, and phenylalanine 267–isoleucine 287.

It belongs to the UppP family.

It localises to the cell membrane. It carries out the reaction di-trans,octa-cis-undecaprenyl diphosphate + H2O = di-trans,octa-cis-undecaprenyl phosphate + phosphate + H(+). In terms of biological role, catalyzes the dephosphorylation of undecaprenyl diphosphate (UPP). Confers resistance to bacitracin. This chain is Undecaprenyl-diphosphatase, found in Staphylococcus aureus (strain bovine RF122 / ET3-1).